The sequence spans 206 residues: Ribosomal RNA large subunit methyltransferase E (206 aa).

Positions 60, 62, 80, 96, and 121 each coordinate S-adenosyl-L-methionine. The active-site Proton acceptor is the K161.

The protein belongs to the class I-like SAM-binding methyltransferase superfamily. RNA methyltransferase RlmE family.

The protein localises to the cytoplasm. It carries out the reaction uridine(2552) in 23S rRNA + S-adenosyl-L-methionine = 2'-O-methyluridine(2552) in 23S rRNA + S-adenosyl-L-homocysteine + H(+). Specifically methylates the uridine in position 2552 of 23S rRNA at the 2'-O position of the ribose in the fully assembled 50S ribosomal subunit. The protein is Ribosomal RNA large subunit methyltransferase E of Francisella tularensis subsp. tularensis (strain FSC 198).